The sequence spans 204 residues: Cytochrome c biogenesis ATP-binding export protein CcmA (204 aa).

The ABC transporter domain maps to 2–203 (LEADNLECVR…PAGTVRELRL (202 aa)). 34–41 (GRNGAGKT) serves as a coordination point for ATP.

It belongs to the ABC transporter superfamily. CcmA exporter (TC 3.A.1.107) family. The complex is composed of two ATP-binding proteins (CcmA) and two transmembrane proteins (CcmB).

The protein resides in the cell inner membrane. The catalysed reaction is heme b(in) + ATP + H2O = heme b(out) + ADP + phosphate + H(+). In terms of biological role, part of the ABC transporter complex CcmAB involved in the biogenesis of c-type cytochromes; once thought to export heme, this seems not to be the case, but its exact role is uncertain. Responsible for energy coupling to the transport system. This is Cytochrome c biogenesis ATP-binding export protein CcmA from Dechloromonas aromatica (strain RCB).